Consider the following 156-residue polypeptide: Small ribosomal subunit protein uS7 (156 aa).

This sequence belongs to the universal ribosomal protein uS7 family. In terms of assembly, part of the 30S ribosomal subunit. Contacts proteins S9 and S11.

Its function is as follows. One of the primary rRNA binding proteins, it binds directly to 16S rRNA where it nucleates assembly of the head domain of the 30S subunit. Is located at the subunit interface close to the decoding center, probably blocks exit of the E-site tRNA. This is Small ribosomal subunit protein uS7 from Acidithiobacillus ferrooxidans (strain ATCC 53993 / BNL-5-31) (Leptospirillum ferrooxidans (ATCC 53993)).